The chain runs to 20 residues: Cytochrome P450 2A7 (20 aa).

This sequence belongs to the cytochrome P450 family. Heme is required as a cofactor.

The protein resides in the endoplasmic reticulum membrane. It localises to the microsome membrane. It carries out the reaction an organic molecule + reduced [NADPH--hemoprotein reductase] + O2 = an alcohol + oxidized [NADPH--hemoprotein reductase] + H2O + H(+). In terms of biological role, exhibits a high coumarin 7-hydroxylase activity. This Papio sp. (Baboon) protein is Cytochrome P450 2A7 (CYP2A7).